The following is a 357-amino-acid chain: Phosphoribosylformylglycinamidine cyclo-ligase (357 aa).

The protein belongs to the AIR synthase family.

It localises to the cytoplasm. It catalyses the reaction 2-formamido-N(1)-(5-O-phospho-beta-D-ribosyl)acetamidine + ATP = 5-amino-1-(5-phospho-beta-D-ribosyl)imidazole + ADP + phosphate + H(+). It functions in the pathway purine metabolism; IMP biosynthesis via de novo pathway; 5-amino-1-(5-phospho-D-ribosyl)imidazole from N(2)-formyl-N(1)-(5-phospho-D-ribosyl)glycinamide: step 2/2. The protein is Phosphoribosylformylglycinamidine cyclo-ligase of Allorhizobium ampelinum (strain ATCC BAA-846 / DSM 112012 / S4) (Agrobacterium vitis (strain S4)).